The sequence spans 294 residues: tRNA-cytidine(32) 2-sulfurtransferase (294 aa).

Positions 58-63 (SGGKDS) match the PP-loop motif motif. [4Fe-4S] cluster contacts are provided by Cys-133, Cys-136, and Cys-224.

Belongs to the TtcA family. Homodimer. The cofactor is Mg(2+). [4Fe-4S] cluster serves as cofactor.

The protein resides in the cytoplasm. It catalyses the reaction cytidine(32) in tRNA + S-sulfanyl-L-cysteinyl-[cysteine desulfurase] + AH2 + ATP = 2-thiocytidine(32) in tRNA + L-cysteinyl-[cysteine desulfurase] + A + AMP + diphosphate + H(+). It participates in tRNA modification. Its function is as follows. Catalyzes the ATP-dependent 2-thiolation of cytidine in position 32 of tRNA, to form 2-thiocytidine (s(2)C32). The sulfur atoms are provided by the cysteine/cysteine desulfurase (IscS) system. This Ruegeria pomeroyi (strain ATCC 700808 / DSM 15171 / DSS-3) (Silicibacter pomeroyi) protein is tRNA-cytidine(32) 2-sulfurtransferase.